A 473-amino-acid chain; its full sequence is Photosystem II CP43 reaction center protein (473 aa).

Positions 1 to 14 (MKTLYSLRRFYPVE) are excised as a propeptide. Position 15 is an N-acetylthreonine (T15). At T15 the chain carries Phosphothreonine. The next 5 helical transmembrane spans lie at 69-93 (LFEVAHFVPEKPMYEQGLILLPHLA), 134-155 (LLGPETLEESFPFFGYVWKDRN), 178-200 (KALYFGGVYDTWAPGGGDVRRIT), 255-275 (KPFAWARRAFVWSGEAYLSYS), and 291-312 (WFNNTAYPSEFYGPTGPEASQA). Residue E367 participates in [CaMn4O5] cluster binding. The helical transmembrane segment at 447–471 (RARAAAAGFEKGIDRDFEPVLFMTP) threads the bilayer.

It belongs to the PsbB/PsbC family. PsbC subfamily. PSII is composed of 1 copy each of membrane proteins PsbA, PsbB, PsbC, PsbD, PsbE, PsbF, PsbH, PsbI, PsbJ, PsbK, PsbL, PsbM, PsbT, PsbX, PsbY, PsbZ, Psb30/Ycf12, at least 3 peripheral proteins of the oxygen-evolving complex and a large number of cofactors. It forms dimeric complexes. Requires Binds multiple chlorophylls and provides some of the ligands for the Ca-4Mn-5O cluster of the oxygen-evolving complex. It may also provide a ligand for a Cl- that is required for oxygen evolution. PSII binds additional chlorophylls, carotenoids and specific lipids. as cofactor.

The protein resides in the plastid. It localises to the chloroplast thylakoid membrane. One of the components of the core complex of photosystem II (PSII). It binds chlorophyll and helps catalyze the primary light-induced photochemical processes of PSII. PSII is a light-driven water:plastoquinone oxidoreductase, using light energy to abstract electrons from H(2)O, generating O(2) and a proton gradient subsequently used for ATP formation. The protein is Photosystem II CP43 reaction center protein of Nuphar advena (Common spatterdock).